The primary structure comprises 65 residues: Sec-independent protein translocase protein TatA (65 aa).

Residues 9–29 traverse the membrane as a helical segment; sequence ILIIVLLVVVVFGIGKLPQVG. Residues 43–65 form a disordered region; that stretch reads SSGEEEKEEVETKEETKTIEKSE. Residues 45–54 show a composition bias toward acidic residues; sequence GEEEKEEVET. A compositionally biased stretch (basic and acidic residues) spans 55 to 65; that stretch reads KEETKTIEKSE.

The protein belongs to the TatA/E family. Forms a complex with TatC.

The protein localises to the cell membrane. Part of the twin-arginine translocation (Tat) system that transports large folded proteins containing a characteristic twin-arginine motif in their signal peptide across membranes. TatA could form the protein-conducting channel of the Tat system. The sequence is that of Sec-independent protein translocase protein TatA from Dehalococcoides mccartyi (strain ATCC BAA-2266 / KCTC 15142 / 195) (Dehalococcoides ethenogenes (strain 195)).